A 294-amino-acid chain; its full sequence is Ventral anterior homeobox 2b (294 aa).

Residues 1-10 are compositionally biased toward basic and acidic residues; sequence MGDGVSEERS. Disordered regions lie at residues 1-27, 43-65, 149-168, 190-223, and 272-294; these read MGDG…VRDR, KDIP…DSQS, RRTK…SSST, PAPP…PVIS, and SSAF…KSTS. Residues 98–157 constitute a DNA-binding region (homeobox); sequence PKRTRTSFTAEQLYRLELEFQRCQYVVGRERTELARQLNLSETQVKVWFQNRRTKQKKDQ. The span at 154–165 shows a compositional bias: basic and acidic residues; that stretch reads KKDQSRDSEKRS. Residues 197-219 are compositionally biased toward low complexity; that stretch reads SSQNNMGTSSGNGTSLGTSGSTS. A compositionally biased stretch (basic and acidic residues) spans 279–288; sequence TRLDRKDTAS.

It belongs to the EMX homeobox family.

Its subcellular location is the nucleus. Its function is as follows. Transcription factor that may function in dorsoventral specification of the forebrain. Regulates the expression of Wnt signaling antagonists. In Xenopus laevis (African clawed frog), this protein is Ventral anterior homeobox 2b (vax2-b).